We begin with the raw amino-acid sequence, 349 residues long: Biotin synthase (349 aa).

Positions 1–11 are enriched in basic and acidic residues; it reads MLEGIEREAAE. Residues 1 to 30 are disordered; that stretch reads MLEGIEREAAEHSNGCSGPAGHAPPAGAPR. The 220-residue stretch at 64–283 folds into the Radical SAM core domain; it reads HEVQLCTLLS…IAVARVMMPR (220 aa). [4Fe-4S] cluster contacts are provided by C79, C83, and C86. [2Fe-2S] cluster is bound by residues C123, C155, C215, and R287.

It belongs to the radical SAM superfamily. Biotin synthase family. In terms of assembly, homodimer. It depends on [4Fe-4S] cluster as a cofactor. [2Fe-2S] cluster serves as cofactor.

It carries out the reaction (4R,5S)-dethiobiotin + (sulfur carrier)-SH + 2 reduced [2Fe-2S]-[ferredoxin] + 2 S-adenosyl-L-methionine = (sulfur carrier)-H + biotin + 2 5'-deoxyadenosine + 2 L-methionine + 2 oxidized [2Fe-2S]-[ferredoxin]. It functions in the pathway cofactor biosynthesis; biotin biosynthesis; biotin from 7,8-diaminononanoate: step 2/2. Catalyzes the conversion of dethiobiotin (DTB) to biotin by the insertion of a sulfur atom into dethiobiotin via a radical-based mechanism. The polypeptide is Biotin synthase (Sorangium cellulosum (strain So ce56) (Polyangium cellulosum (strain So ce56))).